Consider the following 275-residue polypeptide: Ribosomal RNA small subunit methyltransferase A (275 aa).

S-adenosyl-L-methionine contacts are provided by Asn-28, Leu-30, Gly-55, Glu-77, Asp-103, and Asn-123.

It belongs to the class I-like SAM-binding methyltransferase superfamily. rRNA adenine N(6)-methyltransferase family. RsmA subfamily.

It is found in the cytoplasm. It carries out the reaction adenosine(1518)/adenosine(1519) in 16S rRNA + 4 S-adenosyl-L-methionine = N(6)-dimethyladenosine(1518)/N(6)-dimethyladenosine(1519) in 16S rRNA + 4 S-adenosyl-L-homocysteine + 4 H(+). In terms of biological role, specifically dimethylates two adjacent adenosines (A1518 and A1519) in the loop of a conserved hairpin near the 3'-end of 16S rRNA in the 30S particle. May play a critical role in biogenesis of 30S subunits. The protein is Ribosomal RNA small subunit methyltransferase A of Rhizobium johnstonii (strain DSM 114642 / LMG 32736 / 3841) (Rhizobium leguminosarum bv. viciae).